We begin with the raw amino-acid sequence, 514 residues long: Cytidine and dCMP deaminase domain-containing protein 1 (514 aa).

2 stretches are compositionally biased toward polar residues: residues 1–11 (MKEAGQMQNLE) and 18–27 (SVSTQTGSMT). Disordered stretches follow at residues 1–27 (MKEA…GSMT) and 55–83 (RQKS…TDKR). The span at 59–83 (QKNEEGKHGPLGDNEERTRVSTDKR) shows a compositional bias: basic and acidic residues. Positions 70–168 (GDNEERTRVS…SLLTEASSSE (99 aa)) constitute a CMP/dCMP-type deaminase 1 domain. The Zn(2+) site is built by histidine 109, cysteine 134, and cysteine 137. The Nuclear export signal motif lies at 271–283 (NLRQNMKDLILLL). A CMP/dCMP-type deaminase 2 domain is found at 317–482 (EIARHCMVQA…LNPSGAYGLE (166 aa)). Residue histidine 398 participates in Zn(2+) binding. The active-site Proton donor is glutamate 400. Zn(2+)-binding residues include cysteine 426 and cysteine 429. Positions 480–514 (GLEQNEPERRENGVLRPVPQKEEQHQDKKLRLGIH) are disordered. The span at 485-514 (EPERRENGVLRPVPQKEEQHQDKKLRLGIH) shows a compositional bias: basic and acidic residues. A Bipartite nuclear localization signal motif is present at residues 488 to 510 (RRENGVLRPVPQKEEQHQDKKLR).

Belongs to the cytidine and deoxycytidylate deaminase family. Requires Zn(2+) as cofactor. In terms of tissue distribution, widely expressed. Expressed at high levels in the testis.

The protein resides in the cytoplasm. Its subcellular location is the nucleus. It carries out the reaction 2'-deoxycytidine + H2O + H(+) = 2'-deoxyuridine + NH4(+). The catalysed reaction is cytidine + H2O + H(+) = uridine + NH4(+). In terms of biological role, catalyzes the deamination of cytidine and deoxycytidine into uridine and deoxyuridine, respectively. May play an important role in testicular development and spermatogenesis. The protein is Cytidine and dCMP deaminase domain-containing protein 1 (CDADC1) of Homo sapiens (Human).